A 357-amino-acid chain; its full sequence is UDP-N-acetylglucosamine--N-acetylmuramyl-(pentapeptide) pyrophosphoryl-undecaprenol N-acetylglucosamine transferase (357 aa).

Residues 14 to 16, Asn120, Arg164, Ser194, and Gln291 each bind UDP-N-acetyl-alpha-D-glucosamine; that span reads TGG.

It belongs to the glycosyltransferase 28 family. MurG subfamily.

Its subcellular location is the cell inner membrane. The enzyme catalyses di-trans,octa-cis-undecaprenyl diphospho-N-acetyl-alpha-D-muramoyl-L-alanyl-D-glutamyl-meso-2,6-diaminopimeloyl-D-alanyl-D-alanine + UDP-N-acetyl-alpha-D-glucosamine = di-trans,octa-cis-undecaprenyl diphospho-[N-acetyl-alpha-D-glucosaminyl-(1-&gt;4)]-N-acetyl-alpha-D-muramoyl-L-alanyl-D-glutamyl-meso-2,6-diaminopimeloyl-D-alanyl-D-alanine + UDP + H(+). Its pathway is cell wall biogenesis; peptidoglycan biosynthesis. Its function is as follows. Cell wall formation. Catalyzes the transfer of a GlcNAc subunit on undecaprenyl-pyrophosphoryl-MurNAc-pentapeptide (lipid intermediate I) to form undecaprenyl-pyrophosphoryl-MurNAc-(pentapeptide)GlcNAc (lipid intermediate II). The protein is UDP-N-acetylglucosamine--N-acetylmuramyl-(pentapeptide) pyrophosphoryl-undecaprenol N-acetylglucosamine transferase of Fusobacterium nucleatum subsp. nucleatum (strain ATCC 25586 / DSM 15643 / BCRC 10681 / CIP 101130 / JCM 8532 / KCTC 2640 / LMG 13131 / VPI 4355).